Reading from the N-terminus, the 288-residue chain is Lysosomal thioesterase PPT2 homolog (288 aa).

Residues Met1 to Ala22 form the signal peptide. Ser98 (nucleophile) is an active-site residue. Residue Asn192 is glycosylated (N-linked (GlcNAc...) asparagine). Catalysis depends on residues Asp214 and His269.

The protein belongs to the palmitoyl-protein thioesterase family. In terms of tissue distribution, expressed in adult head and crop.

It localises to the lysosome. The catalysed reaction is hexadecanoyl-CoA + H2O = hexadecanoate + CoA + H(+). It carries out the reaction S-hexadecanoyl-N-acetylcysteamine + H2O = N-acetylcysteamine + hexadecanoate + H(+). Its function is as follows. Catalyzes the cleavage of thioester bonds from S-palmitoyl-CoA or S-palmitoyl-N-acetylcysteamine (unbranched structures) but does not have activity against palmitoylcysteine or palmitoylated proteins, branched structures or bulky head groups. Conversely, hydrolyzes both long and short chain fatty acyl-CoA substrate. This chain is Lysosomal thioesterase PPT2 homolog (Ppt2), found in Drosophila melanogaster (Fruit fly).